A 545-amino-acid polypeptide reads, in one-letter code: MTTKYIFVTGGVVSSLGKGIAAGSLAAILEARGLDVTILKLDPYINVDPGTMSPIQHGEVFVTDDGAETDLDLGHYERYIRTRMTARNNFTTGRVYSEVMAKERRGDYLGATIQVIPHITNEIQERIVAGGKGHDIAIVELGGTVGDIESQPFLEAIRQLGLKVGRDSVIYMHLTLLPYLKTAGEVKTKPTQHSVKELRSLGIQPDILVCRSEVNIPINERVKIALFCNVTEKSVILLRDVDSIYKIPALLKAQGLDEICVKRFGLDCPEADLSEWAQVVSEEANTSNEVIIGMVGKYTELPDAYKSVNEALKHGGLKNAASVKIKYIDSQDVEVRGVSILEGVDAILVPGGFGERGIEGKILAAQYARVNKIPYLGICLGMQVAIIEFARNVAGLKNAHSTEFEANCDQPVVGLITEWLDKTGEVEQRTENSDLGGTMRVGAQLCHLKKGSKVFDMYGTKEIFERHRHRYEVNNNLLPILEKAGLVVTGLSEDKKLVEIIEIPNHPWFVASQFHPEFTSTPRDGHPLFKGFIKSAIDHQQGRFE.

Residues 1-266 are amidoligase domain; sequence MTTKYIFVTG…DEICVKRFGL (266 aa). S14 contacts CTP. S14 lines the UTP pocket. ATP-binding positions include 15–20 and D72; that span reads SLGKGI. Residues D72 and E140 each contribute to the Mg(2+) site. CTP is bound by residues 147-149, 187-192, and K223; these read DIE and KTKPTQ. UTP-binding positions include 187-192 and K223; that span reads KTKPTQ. Residue 239 to 241 coordinates ATP; the sequence is RDV. The Glutamine amidotransferase type-1 domain maps to 291–542; that stretch reads IIGMVGKYTE…IKSAIDHQQG (252 aa). G352 is an L-glutamine binding site. The active-site Nucleophile; for glutamine hydrolysis is C379. L-glutamine contacts are provided by residues 380–383, E403, and R470; that span reads LGMQ. Catalysis depends on residues H515 and E517.

It belongs to the CTP synthase family. In terms of assembly, homotetramer.

The catalysed reaction is UTP + L-glutamine + ATP + H2O = CTP + L-glutamate + ADP + phosphate + 2 H(+). It catalyses the reaction L-glutamine + H2O = L-glutamate + NH4(+). It carries out the reaction UTP + NH4(+) + ATP = CTP + ADP + phosphate + 2 H(+). It participates in pyrimidine metabolism; CTP biosynthesis via de novo pathway; CTP from UDP: step 2/2. Its activity is regulated as follows. Allosterically activated by GTP, when glutamine is the substrate; GTP has no effect on the reaction when ammonia is the substrate. The allosteric effector GTP functions by stabilizing the protein conformation that binds the tetrahedral intermediate(s) formed during glutamine hydrolysis. Inhibited by the product CTP, via allosteric rather than competitive inhibition. In terms of biological role, catalyzes the ATP-dependent amination of UTP to CTP with either L-glutamine or ammonia as the source of nitrogen. Regulates intracellular CTP levels through interactions with the four ribonucleotide triphosphates. The polypeptide is CTP synthase (Psychromonas ingrahamii (strain DSM 17664 / CCUG 51855 / 37)).